Here is a 609-residue protein sequence, read N- to C-terminus: Beta-(1--&gt;2)glucan export ATP-binding/permease protein NdvA (609 aa).

In terms of domain architecture, ABC transmembrane type-1 spans 21 to 311 (GWILAGANLL…VVSFINSVFM (291 aa)). The next 6 helical transmembrane spans lie at 22 to 42 (WILAGANLLLAGAQFAEPVLF), 68 to 88 (LLAVWAAFGLFTILCGVTVAL), 146 to 166 (EHFAAMMSLVVLLPLSLYINW), 167 to 187 (RLAILLFALCIVFTMLTTLVV), 248 to 268 (WWAVVTVMTRASTTITILAIF), and 285 to 305 (IVMFVSFATMLIQRLEQVVSF). One can recognise an ABC transporter domain in the interval 345 to 579 (VEFNDVSFSY…GGHFAQLAKA (235 aa)). 378-385 (GPTGAGKS) provides a ligand contact to ATP.

It belongs to the ABC transporter superfamily. Beta-(1--&gt;2)glucan exporter (TC 3.A.1.108.1) family. Homodimer.

The protein resides in the cell inner membrane. The enzyme catalyses [(1-&gt;2)-beta-D-glucosyl](n)(in) + ATP + H2O = [(1-&gt;2)-beta-D-glucosyl](n)(out) + ADP + phosphate + H(+). In terms of biological role, involved in beta-(1--&gt;2)glucan export. Transmembrane domains (TMD) form a pore in the inner membrane and the ATP-binding domain (NBD) is responsible for energy generation. The chain is Beta-(1--&gt;2)glucan export ATP-binding/permease protein NdvA from Nitrobacter winogradskyi (strain ATCC 25391 / DSM 10237 / CIP 104748 / NCIMB 11846 / Nb-255).